The primary structure comprises 173 residues: Large ribosomal subunit protein uL10 (173 aa).

Belongs to the universal ribosomal protein uL10 family. As to quaternary structure, part of the ribosomal stalk of the 50S ribosomal subunit. The N-terminus interacts with L11 and the large rRNA to form the base of the stalk. The C-terminus forms an elongated spine to which L12 dimers bind in a sequential fashion forming a multimeric L10(L12)X complex.

Its function is as follows. Forms part of the ribosomal stalk, playing a central role in the interaction of the ribosome with GTP-bound translation factors. The protein is Large ribosomal subunit protein uL10 (rplJ) of Synechocystis sp. (strain ATCC 27184 / PCC 6803 / Kazusa).